We begin with the raw amino-acid sequence, 303 residues long: Tobamovirus multiplication protein 3 (303 aa).

The Extracellular portion of the chain corresponds to 1–48 (MRIGGVEVTKFASEMMSSSSSSAVEMLNLKEASNWWSDVNESPIWQDR). Residues 49–69 (IFHVLAVLYGIVSLVAVIQLV) form a helical membrane-spanning segment. Over 70-82 (RIQLRVPEYGWTT) the chain is Cytoplasmic. A helical membrane pass occupies residues 83-103 (QKVFHFLNFVVNGVRAVVFVF). The Extracellular segment spans residues 104-117 (RRNVQFMQPEILQH). A helical membrane pass occupies residues 118 to 138 (ILLDIPSLAFFTTYALLVLFW). At 139–156 (AEIYYQARAVSTDGLRPS) the chain is on the cytoplasmic side. A helical membrane pass occupies residues 157 to 177 (FFTINAVVYVVQIALWLVLWW). The Extracellular segment spans residues 178 to 183 (KPVRVM). The helical transmembrane segment at 184–204 (VILSKMFFAGVSLFAALGFLL) threads the bilayer. Topologically, residues 205–232 (YGGRLFLMLQRFPVESKGRRKKLQEVGY) are cytoplasmic. Residues 233-253 (VTTICFTCFLIRCIMMCFAAF) traverse the membrane as a helical segment. The Extracellular segment spans residues 254–265 (DEGANLDVLDHP). The helical transmembrane segment at 266 to 286 (ILNFIYYLLVEILPSSLVLFI) threads the bilayer. At 287-303 (LRKLPPKRGITQYHQIR) the chain is on the cytoplasmic side.

This sequence belongs to the plant tobamovirus multiplication TOM1 protein family. Constituent of tobamovirus replication complex. Interacts with the helicase domain of tobamovirus-encoded replication proteins.

The protein localises to the vacuole membrane. Contributes to the intracellular multiplication of tobamoviruses, probably being a membrane anchor promoting the formation of the replication complex. The polypeptide is Tobamovirus multiplication protein 3 (TOM3) (Arabidopsis thaliana (Mouse-ear cress)).